The chain runs to 1093 residues: Leucine-rich repeats and immunoglobulin-like domains protein 1 (1093 aa).

Positions Met-1–Ala-34 are cleaved as a signal peptide. Positions Ala-35–Ser-68 constitute an LRRNT domain. The Extracellular portion of the chain corresponds to Ala-35–Gly-794. Cys-45 and Cys-54 form a disulfide bridge. LRR repeat units follow at residues Trp-69–Asp-90, Asn-93–Ser-114, His-116–Ala-137, Ser-140–His-161, Pro-164–Gly-185, Ser-189–Leu-210, Arg-212–Gly-233, Ser-236–Gly-257, Lys-260–Gly-281, Ala-284–Phe-305, Lys-308–Glu-329, Ser-332–Gly-353, Ser-356–Phe-378, Ser-383–Gly-404, and Gly-407–Lys-428. An N-linked (GlcNAc...) asparagine glycan is attached at Asn-74. An N-linked (GlcNAc...) asparagine glycan is attached at Asn-150. N-linked (GlcNAc...) asparagine glycosylation is present at Asn-246. Residues Asn-292 and Asn-318 are each glycosylated (N-linked (GlcNAc...) asparagine). In terms of domain architecture, LRRCT spans Asp-440–Asp-491. 4 disulfide bridges follow: Cys-444–Cys-468, Cys-446–Cys-489, Cys-516–Cys-577, and Cys-620–Cys-672. Ig-like C2-type domains are found at residues Pro-495–Thr-594, Pro-599–Thr-688, and Pro-693–Ser-779. Asn-684 carries an N-linked (GlcNAc...) asparagine glycan. A disulfide bond links Cys-714 and Cys-763. Residues Ile-795–Ile-815 traverse the membrane as a helical segment. Over Tyr-816 to Ser-1093 the chain is Cytoplasmic. Disordered stretches follow at residues Ala-946–Thr-983 and Pro-1063–Ser-1093.

As to quaternary structure, interacts (via extracellular LRR and Ig-like domains) with EGFR/ERBB1, ERBB2, ERBB3 and ERBB4 (via extracellular domain). The physiological relevance of the interaction is controversial; LRIG1 may have low affinity for EGFR, and interaction may occur only when high levels of both proteins are present. In terms of tissue distribution, widely expressed.

Its subcellular location is the cell membrane. Its function is as follows. Acts as a feedback negative regulator of signaling by receptor tyrosine kinases, through a mechanism that involves enhancement of receptor ubiquitination and accelerated intracellular degradation. The sequence is that of Leucine-rich repeats and immunoglobulin-like domains protein 1 from Homo sapiens (Human).